A 478-amino-acid polypeptide reads, in one-letter code: tRNA(Ile)-lysidine synthase (478 aa).

Residue 27–32 participates in ATP binding; that stretch reads SGGSDS.

Belongs to the tRNA(Ile)-lysidine synthase family.

The protein resides in the cytoplasm. It carries out the reaction cytidine(34) in tRNA(Ile2) + L-lysine + ATP = lysidine(34) in tRNA(Ile2) + AMP + diphosphate + H(+). Its function is as follows. Ligates lysine onto the cytidine present at position 34 of the AUA codon-specific tRNA(Ile) that contains the anticodon CAU, in an ATP-dependent manner. Cytidine is converted to lysidine, thus changing the amino acid specificity of the tRNA from methionine to isoleucine. In Rickettsia conorii (strain ATCC VR-613 / Malish 7), this protein is tRNA(Ile)-lysidine synthase.